The chain runs to 104 residues: Large ribosomal subunit protein bL21 (104 aa).

It belongs to the bacterial ribosomal protein bL21 family. Part of the 50S ribosomal subunit. Contacts protein L20.

In terms of biological role, this protein binds to 23S rRNA in the presence of protein L20. This is Large ribosomal subunit protein bL21 from Clostridium tetani (strain Massachusetts / E88).